Here is a 260-residue protein sequence, read N- to C-terminus: MSDEQYDAALSLLRRLDPKNVSVNLNSLCKIAPELAEDLLSSVDQPLGVKTCKSTKKEYLTCDYNRDGDSFRSPWSGDYEPATDGPTPSAALRKLEVLANDSFDIYRDLYYEGGVSSVYLWDQGEGDNTNSFAGVVLLKKTSPSSSWDSIHVFEVETSRGEGIYRVTSTVILDLGSKSPKLGLSGNLTRQTEREMAVDEPSQHIANLGSIVEDVESKLRNQLQEVYFGKARDIVGQVRSLGGVEDAKQKQRQEEVIKGLQ.

Belongs to the F-actin-capping protein beta subunit family. Component of the F-actin capping complex, composed of a heterodimer of an alpha and a beta subunit.

The protein resides in the cytoplasm. Its subcellular location is the cytoskeleton. It is found in the actin patch. In terms of biological role, F-actin-capping proteins bind in a Ca(2+)-independent manner to the fast growing ends of actin filaments (barbed end) thereby blocking the exchange of subunits at these ends. Unlike other capping proteins (such as gelsolin and severin), these proteins do not sever actin filaments. This Yarrowia lipolytica (strain CLIB 122 / E 150) (Yeast) protein is F-actin-capping protein subunit beta (CAP2).